The sequence spans 218 residues: Adenylate kinase (218 aa).

10–15 is a binding site for ATP; that stretch reads GAGKGT. The segment at 30-59 is NMP; it reads STGDMLRAAVKAGTPLGLEAKKVMDAGGLV. AMP is bound by residues T31, R36, 57-59, 85-88, and Q92; these read GLV and GFPR. The segment at 122–159 is LID; sequence GRRVHPASGRSYHVRFNPPKAEGVDDVTGEPLVQRDDD. Residues R123 and 132-133 contribute to the ATP site; that span reads SY. Residues R156 and R167 each contribute to the AMP site. Position 203 (G203) interacts with ATP.

This sequence belongs to the adenylate kinase family. As to quaternary structure, monomer.

It is found in the cytoplasm. The catalysed reaction is AMP + ATP = 2 ADP. It participates in purine metabolism; AMP biosynthesis via salvage pathway; AMP from ADP: step 1/1. Its function is as follows. Catalyzes the reversible transfer of the terminal phosphate group between ATP and AMP. Plays an important role in cellular energy homeostasis and in adenine nucleotide metabolism. The sequence is that of Adenylate kinase from Bordetella bronchiseptica (strain ATCC BAA-588 / NCTC 13252 / RB50) (Alcaligenes bronchisepticus).